We begin with the raw amino-acid sequence, 685 residues long: Cilia- and flagella-associated protein 36 (685 aa).

A disordered region spans residues 1-20 (MLRRFSKKNKNPEGGSDDAS). A coiled-coil region spans residues 197–242 (SEELEMMAQNSRIQREALEQEIRKEEILLQQALDEGARAQNQNQNQ). The segment covering 287 to 310 (TGTMTSSTGVSVGTLTNTGVSSGT) has biased composition (low complexity). Positions 287 to 573 (TGTMTSSTGV…LRGNKYDGDV (287 aa)) are disordered. A compositionally biased stretch (basic and acidic residues) spans 363–372 (EAEKSKRERP). A compositionally biased stretch (polar residues) spans 410 to 434 (GTTSKKSIATVTASPEMSSKTTQME). Composition is skewed to basic and acidic residues over residues 439–456 (GEGK…ERKY) and 508–557 (HEPR…ESKP).

This sequence belongs to the CFAP36 family. Expressed in amphid and phasmid ciliated neurons.

Its subcellular location is the cell projection. It localises to the cilium. The protein localises to the cytoplasm. The protein resides in the cytoskeleton. It is found in the cilium axoneme. The polypeptide is Cilia- and flagella-associated protein 36 (Caenorhabditis elegans).